A 252-amino-acid polypeptide reads, in one-letter code: MLAKRIIPCLDVKEGRVVKGVNFIGLQDVGDPVEIAALYNDAGADEIVFLDITATHEGRKTIIDVVKKTASKVFIPLTVGGGISSVKDMYKLLRAGADKVSINSAAVRNPKLIEEGAQHFGSQCIVVAIDARKVAEGKWNVYVNGGRVDTGMDAIEWAKRVVMLGAGEILLTSMDADGTKNGYDLRLTEEISKSVSVPVIASGGCGHADHIIEVFQKTTVDAALAASIFHYGEATVQDVKRKLRNANVEVRL.

Residues D11 and D130 contribute to the active site.

Belongs to the HisA/HisF family. As to quaternary structure, heterodimer of HisH and HisF.

Its subcellular location is the cytoplasm. The enzyme catalyses 5-[(5-phospho-1-deoxy-D-ribulos-1-ylimino)methylamino]-1-(5-phospho-beta-D-ribosyl)imidazole-4-carboxamide + L-glutamine = D-erythro-1-(imidazol-4-yl)glycerol 3-phosphate + 5-amino-1-(5-phospho-beta-D-ribosyl)imidazole-4-carboxamide + L-glutamate + H(+). The protein operates within amino-acid biosynthesis; L-histidine biosynthesis; L-histidine from 5-phospho-alpha-D-ribose 1-diphosphate: step 5/9. IGPS catalyzes the conversion of PRFAR and glutamine to IGP, AICAR and glutamate. The HisF subunit catalyzes the cyclization activity that produces IGP and AICAR from PRFAR using the ammonia provided by the HisH subunit. This Bacillus thuringiensis (strain Al Hakam) protein is Imidazole glycerol phosphate synthase subunit HisF.